We begin with the raw amino-acid sequence, 156 residues long: 6,7-dimethyl-8-ribityllumazine synthase (156 aa).

5-amino-6-(D-ribitylamino)uracil is bound by residues Phe22, 57–59, and 81–83; these read AVE and CVI. 86-87 provides a ligand contact to (2S)-2-hydroxy-3-oxobutyl phosphate; that stretch reads GT. His89 (proton donor) is an active-site residue. A 5-amino-6-(D-ribitylamino)uracil-binding site is contributed by Phe114. Arg128 contributes to the (2S)-2-hydroxy-3-oxobutyl phosphate binding site.

It belongs to the DMRL synthase family. Forms an icosahedral capsid composed of 60 subunits, arranged as a dodecamer of pentamers.

It catalyses the reaction (2S)-2-hydroxy-3-oxobutyl phosphate + 5-amino-6-(D-ribitylamino)uracil = 6,7-dimethyl-8-(1-D-ribityl)lumazine + phosphate + 2 H2O + H(+). The protein operates within cofactor biosynthesis; riboflavin biosynthesis; riboflavin from 2-hydroxy-3-oxobutyl phosphate and 5-amino-6-(D-ribitylamino)uracil: step 1/2. In terms of biological role, catalyzes the formation of 6,7-dimethyl-8-ribityllumazine by condensation of 5-amino-6-(D-ribitylamino)uracil with 3,4-dihydroxy-2-butanone 4-phosphate. This is the penultimate step in the biosynthesis of riboflavin. The chain is 6,7-dimethyl-8-ribityllumazine synthase from Vibrio cholerae serotype O1 (strain ATCC 39315 / El Tor Inaba N16961).